The chain runs to 429 residues: Aspartate--tRNA(Asp/Asn) ligase (429 aa).

Glu-167 lines the L-aspartate pocket. An aspartate region spans residues 189 to 192 (QLYK). Arg-210 is an L-aspartate binding site. Residues 210–212 (RAE) and Glu-352 each bind ATP. Mg(2+) contacts are provided by Glu-352 and Ser-355. L-aspartate is bound by residues Ser-355 and Arg-359. Residue 400-403 (GLAR) participates in ATP binding.

This sequence belongs to the class-II aminoacyl-tRNA synthetase family. Type 2 subfamily. Homodimer. It depends on Mg(2+) as a cofactor.

It is found in the cytoplasm. The catalysed reaction is tRNA(Asx) + L-aspartate + ATP = L-aspartyl-tRNA(Asx) + AMP + diphosphate. Its function is as follows. Aspartyl-tRNA synthetase with relaxed tRNA specificity since it is able to aspartylate not only its cognate tRNA(Asp) but also tRNA(Asn). Reaction proceeds in two steps: L-aspartate is first activated by ATP to form Asp-AMP and then transferred to the acceptor end of tRNA(Asp/Asn). The sequence is that of Aspartate--tRNA(Asp/Asn) ligase from Saccharolobus solfataricus (strain ATCC 35092 / DSM 1617 / JCM 11322 / P2) (Sulfolobus solfataricus).